A 427-amino-acid polypeptide reads, in one-letter code: MHDIDFIKNNPELFDEAMQNRNFGKIAHKIIELSANKKHTLTQLYSLQKERNNITQEIEKLKKDNIQCDTQIELSKEITKKINHINNMIKTDSELIDLLNILPNIPDKKVPIGKDENDNIEIRRYGKKVDFKFPPKTHYELGENLNLMDFKQAAKLSGSRFVILKSQLAQLDRALANFMLDVHTQEFGYSEISHPVLVHESAMYGVGQLPKFADDSFKTTDNFRLIPTSEVALTNLVSNTNTNANELPIRLTACSQCFRSEAGSAGKDVRGMMRQHQFNKVELVSIVTEEQSELELERMTQVAEEILKKLELPYRVMMLCTGDLGFSASITYDIEVWIPSQNQYREISSCSNCKAFQARRMNAKYHTISNGNKVNKFVHTLNGSALAIGRTIIAILENYQNQDGSITIPHVLRKYMNNQDIIKNNNY.

228-230 (TSE) lines the L-serine pocket. 259–261 (RSE) is a binding site for ATP. Glu-282 contacts L-serine. Residue 346–349 (EISS) coordinates ATP. Residue Ser-384 participates in L-serine binding.

Belongs to the class-II aminoacyl-tRNA synthetase family. Type-1 seryl-tRNA synthetase subfamily. In terms of assembly, homodimer. The tRNA molecule binds across the dimer.

The protein localises to the cytoplasm. The catalysed reaction is tRNA(Ser) + L-serine + ATP = L-seryl-tRNA(Ser) + AMP + diphosphate + H(+). The enzyme catalyses tRNA(Sec) + L-serine + ATP = L-seryl-tRNA(Sec) + AMP + diphosphate + H(+). It participates in aminoacyl-tRNA biosynthesis; selenocysteinyl-tRNA(Sec) biosynthesis; L-seryl-tRNA(Sec) from L-serine and tRNA(Sec): step 1/1. Its function is as follows. Catalyzes the attachment of serine to tRNA(Ser). Is also able to aminoacylate tRNA(Sec) with serine, to form the misacylated tRNA L-seryl-tRNA(Sec), which will be further converted into selenocysteinyl-tRNA(Sec). The protein is Serine--tRNA ligase of Ehrlichia ruminantium (strain Welgevonden).